A 116-amino-acid chain; its full sequence is Ribosome-binding factor A (116 aa).

This sequence belongs to the RbfA family. As to quaternary structure, monomer. Binds 30S ribosomal subunits, but not 50S ribosomal subunits or 70S ribosomes.

It localises to the cytoplasm. Functionally, one of several proteins that assist in the late maturation steps of the functional core of the 30S ribosomal subunit. Associates with free 30S ribosomal subunits (but not with 30S subunits that are part of 70S ribosomes or polysomes). Required for efficient processing of 16S rRNA. May interact with the 5'-terminal helix region of 16S rRNA. The chain is Ribosome-binding factor A from Ureaplasma urealyticum serovar 10 (strain ATCC 33699 / Western).